The primary structure comprises 252 residues: Small ribosomal subunit protein uS2 (252 aa).

Ser-2 is subject to N-acetylserine. The segment covering 213 to 222 (QVAEETAGAA) has biased composition (low complexity). Positions 213–252 (QVAEETAGAATEEEEAKEEVTEEQTEATEWAEETTEAVAW) are disordered. Over residues 223–252 (TEEEEAKEEVTEEQTEATEWAEETTEAVAW) the composition is skewed to acidic residues.

The protein belongs to the universal ribosomal protein uS2 family. As to quaternary structure, component of the small ribosomal subunit. Mature ribosomes consist of a small (40S) and a large (60S) subunit. The 40S subunit contains about 33 different proteins and 1 molecule of RNA (18S). The 60S subunit contains about 49 different proteins and 3 molecules of RNA (25S, 5.8S and 5S). Interacts with RPS21.

It is found in the cytoplasm. Its function is as follows. Required for the assembly and/or stability of the 40S ribosomal subunit. Required for the processing of the 20S rRNA-precursor to mature 18S rRNA in a late step of the maturation of 40S ribosomal subunits. The sequence is that of Small ribosomal subunit protein uS2 from Zygosaccharomyces rouxii (strain ATCC 2623 / CBS 732 / NBRC 1130 / NCYC 568 / NRRL Y-229).